The sequence spans 250 residues: uncharacterized protein (250 aa).

The signal sequence occupies residues 1–24 (MKGFLKPNFSLGALFLTLSPIATA). Cysteine 25 carries the N-palmitoyl cysteine lipid modification. Cysteine 25 carries the S-diacylglycerol cysteine lipid modification. The TNase-like domain occupies 44–200 (RLRKARVNHW…FNNRKNIFSY (157 aa)).

Its subcellular location is the cell membrane. This is an uncharacterized protein from Mycoplasma genitalium (strain ATCC 33530 / DSM 19775 / NCTC 10195 / G37) (Mycoplasmoides genitalium).